We begin with the raw amino-acid sequence, 353 residues long: Photosystem II D2 protein (353 aa).

Position 2 is an N-acetylthreonine (Thr2). Phosphothreonine is present on Thr2. Residues 41–61 (CAYFALGGWFTGTTFVTSWYT) traverse the membrane as a helical segment. Position 118 (His118) interacts with chlorophyll a. Residues 125-141 (GFMLRQFELARSVQLRP) traverse the membrane as a helical segment. Pheophytin a is bound by residues Gln130 and Asn143. A helical transmembrane segment spans residues 153-166 (VFVSVSLIYPLGQA). His198 is a chlorophyll a binding site. The chain crosses the membrane as a helical span at residues 208–228 (AALLCAIHGATVENTLFEDGD). A plastoquinone is bound by residues His215 and Phe262. Fe cation is bound at residue His215. Residue His269 participates in Fe cation binding. A helical transmembrane segment spans residues 279–295 (GLWMSAIGVVGLALNLR).

This sequence belongs to the reaction center PufL/M/PsbA/D family. As to quaternary structure, PSII is composed of 1 copy each of membrane proteins PsbA, PsbB, PsbC, PsbD, PsbE, PsbF, PsbH, PsbI, PsbJ, PsbK, PsbL, PsbM, PsbT, PsbX, PsbY, PsbZ, Psb30/Ycf12, at least 3 peripheral proteins of the oxygen-evolving complex and a large number of cofactors. It forms dimeric complexes. It depends on The D1/D2 heterodimer binds P680, chlorophylls that are the primary electron donor of PSII, and subsequent electron acceptors. It shares a non-heme iron and each subunit binds pheophytin, quinone, additional chlorophylls, carotenoids and lipids. There is also a Cl(-1) ion associated with D1 and D2, which is required for oxygen evolution. The PSII complex binds additional chlorophylls, carotenoids and specific lipids. as a cofactor.

It localises to the plastid. It is found in the chloroplast thylakoid membrane. The catalysed reaction is 2 a plastoquinone + 4 hnu + 2 H2O = 2 a plastoquinol + O2. Functionally, photosystem II (PSII) is a light-driven water:plastoquinone oxidoreductase that uses light energy to abstract electrons from H(2)O, generating O(2) and a proton gradient subsequently used for ATP formation. It consists of a core antenna complex that captures photons, and an electron transfer chain that converts photonic excitation into a charge separation. The D1/D2 (PsbA/PsbD) reaction center heterodimer binds P680, the primary electron donor of PSII as well as several subsequent electron acceptors. D2 is needed for assembly of a stable PSII complex. The sequence is that of Photosystem II D2 protein from Angiopteris evecta (Mule's foot fern).